A 490-amino-acid polypeptide reads, in one-letter code: Betaine aldehyde dehydrogenase (490 aa).

K(+) contacts are provided by Thr-26, Ile-27, and Asp-93. Gly-150–Trp-152 serves as a coordination point for NAD(+). Lys-162 functions as the Charge relay system in the catalytic mechanism. Position 176-179 (Lys-176–Glu-179) interacts with NAD(+). Residue Val-180 coordinates K(+). Gly-230–Thr-233 provides a ligand contact to NAD(+). Leu-246 is a K(+) binding site. The active-site Proton acceptor is Glu-252. NAD(+)-binding residues include Gly-254, Cys-286, and Glu-387. Cys-286 functions as the Nucleophile in the catalytic mechanism. Position 286 is a cysteine sulfenic acid (-SOH) (Cys-286). Residues Lys-457 and Gly-460 each contribute to the K(+) site. The Charge relay system role is filled by Glu-464.

This sequence belongs to the aldehyde dehydrogenase family. In terms of assembly, dimer of dimers. The cofactor is K(+).

It catalyses the reaction betaine aldehyde + NAD(+) + H2O = glycine betaine + NADH + 2 H(+). It participates in amine and polyamine biosynthesis; betaine biosynthesis via choline pathway; betaine from betaine aldehyde: step 1/1. Involved in the biosynthesis of the osmoprotectant glycine betaine. Catalyzes the irreversible oxidation of betaine aldehyde to the corresponding acid. The polypeptide is Betaine aldehyde dehydrogenase (Pseudomonas paraeruginosa (strain DSM 24068 / PA7) (Pseudomonas aeruginosa (strain PA7))).